The primary structure comprises 266 residues: Undecaprenyl-diphosphatase (266 aa).

8 helical membrane-spanning segments follow: residues 1–21 (METF…FLPI), 39–59 (QGLS…VIYF), 87–107 (WWII…KDFI), 111–131 (FRNT…LWAA), 144–164 (MGWK…IPGT), 183–203 (AAAR…ALLV), 218–238 (ALGL…HFFL), and 244–264 (IGMT…LGLL).

It belongs to the UppP family.

It localises to the cell inner membrane. The enzyme catalyses di-trans,octa-cis-undecaprenyl diphosphate + H2O = di-trans,octa-cis-undecaprenyl phosphate + phosphate + H(+). Its function is as follows. Catalyzes the dephosphorylation of undecaprenyl diphosphate (UPP). Confers resistance to bacitracin. The polypeptide is Undecaprenyl-diphosphatase (Shewanella frigidimarina (strain NCIMB 400)).